A 250-amino-acid polypeptide reads, in one-letter code: Ribosomal RNA-processing protein 15 (250 aa).

Basic and acidic residues predominate over residues 1–27 (MGSKHRVDTKDKKRTRKNAEFGREKRN). Positions 1 to 101 (MGSKHRVDTK…NSKHDDGSTG (101 aa)) are disordered. Acidic residues-rich tracts occupy residues 43–53 (MEGDEAEEDEQ) and 67–83 (EQSD…EDDD). At serine 69 the chain carries Phosphoserine.

Belongs to the RRP15 family.

The protein localises to the nucleus. It localises to the nucleolus. In terms of biological role, constituent of pre-60S ribosomal particles. Required for large subunit rRNA maturation, in particular processing of the 27S pre-rRNA at the A3 and B1 sites to yield 5.8S and 25S rRNA. In Saccharomyces cerevisiae (strain ATCC 204508 / S288c) (Baker's yeast), this protein is Ribosomal RNA-processing protein 15.